The chain runs to 78 residues: Small ribosomal subunit protein bS16c (78 aa).

This sequence belongs to the bacterial ribosomal protein bS16 family.

The protein resides in the plastid. The protein localises to the chloroplast. The protein is Small ribosomal subunit protein bS16c of Daucus carota (Wild carrot).